The following is a 200-amino-acid chain: uncharacterized protein (200 aa).

Its function is as follows. Involved in osmoadaptation. This is an uncharacterized protein from Emericella nidulans (strain FGSC A4 / ATCC 38163 / CBS 112.46 / NRRL 194 / M139) (Aspergillus nidulans).